A 492-amino-acid polypeptide reads, in one-letter code: Ketol-acid reductoisomerase (NADP(+)) (492 aa).

Positions 15 to 208 constitute a KARI N-terminal Rossmann domain; the sequence is AQLGKCRFMA…GGHRAGVLES (194 aa). NADP(+) is bound by residues 45-48, arginine 68, arginine 76, serine 78, and 108-110; these read CGAQ and DKQ. The active site involves histidine 132. Glycine 158 contacts NADP(+). KARI C-terminal knotted domains are found at residues 209–344 and 345–485; these read SFVA…TAAQ and FEGK…MTDM. Residues aspartate 217, glutamate 221, glutamate 389, and glutamate 393 each contribute to the Mg(2+) site. Serine 414 provides a ligand contact to substrate.

This sequence belongs to the ketol-acid reductoisomerase family. It depends on Mg(2+) as a cofactor.

The enzyme catalyses (2R)-2,3-dihydroxy-3-methylbutanoate + NADP(+) = (2S)-2-acetolactate + NADPH + H(+). It catalyses the reaction (2R,3R)-2,3-dihydroxy-3-methylpentanoate + NADP(+) = (S)-2-ethyl-2-hydroxy-3-oxobutanoate + NADPH + H(+). The protein operates within amino-acid biosynthesis; L-isoleucine biosynthesis; L-isoleucine from 2-oxobutanoate: step 2/4. It participates in amino-acid biosynthesis; L-valine biosynthesis; L-valine from pyruvate: step 2/4. Involved in the biosynthesis of branched-chain amino acids (BCAA). Catalyzes an alkyl-migration followed by a ketol-acid reduction of (S)-2-acetolactate (S2AL) to yield (R)-2,3-dihydroxy-isovalerate. In the isomerase reaction, S2AL is rearranged via a Mg-dependent methyl migration to produce 3-hydroxy-3-methyl-2-ketobutyrate (HMKB). In the reductase reaction, this 2-ketoacid undergoes a metal-dependent reduction by NADPH to yield (R)-2,3-dihydroxy-isovalerate. This chain is Ketol-acid reductoisomerase (NADP(+)), found in Erwinia tasmaniensis (strain DSM 17950 / CFBP 7177 / CIP 109463 / NCPPB 4357 / Et1/99).